A 254-amino-acid chain; its full sequence is Imidazole glycerol phosphate synthase subunit HisF (254 aa).

Residues Asp-13 and Asp-132 contribute to the active site.

Belongs to the HisA/HisF family. As to quaternary structure, heterodimer of HisH and HisF.

It is found in the cytoplasm. It carries out the reaction 5-[(5-phospho-1-deoxy-D-ribulos-1-ylimino)methylamino]-1-(5-phospho-beta-D-ribosyl)imidazole-4-carboxamide + L-glutamine = D-erythro-1-(imidazol-4-yl)glycerol 3-phosphate + 5-amino-1-(5-phospho-beta-D-ribosyl)imidazole-4-carboxamide + L-glutamate + H(+). Its pathway is amino-acid biosynthesis; L-histidine biosynthesis; L-histidine from 5-phospho-alpha-D-ribose 1-diphosphate: step 5/9. IGPS catalyzes the conversion of PRFAR and glutamine to IGP, AICAR and glutamate. The HisF subunit catalyzes the cyclization activity that produces IGP and AICAR from PRFAR using the ammonia provided by the HisH subunit. The protein is Imidazole glycerol phosphate synthase subunit HisF of Wolinella succinogenes (strain ATCC 29543 / DSM 1740 / CCUG 13145 / JCM 31913 / LMG 7466 / NCTC 11488 / FDC 602W) (Vibrio succinogenes).